We begin with the raw amino-acid sequence, 204 residues long: Peptide chain release factor homolog (204 aa).

The rRNA-recognition domain, N-terminus stretch occupies residues 2–98; the sequence is ILLQLSSAQG…KNWFLGIGRF (97 aa). The tract at residues 99 to 107 is linker 1; sequence TADEQEQSD. A GGQ domain region spans residues 108–161; sequence AIRYETLRSSGPGGQHVNKTDSAVRATHLASGISVKVQSERSQHANKRLARLLI. Residues 120–122 carry the GGQ motif motif; the sequence is GGQ. Positions 162–179 are linker 2; sequence AWKLEQQQQENSAALKSQ. The interval 180–204 is rRNA-recognition domain, C-terminus; that stretch reads RRMFHHQIERGNPRRTFTGMAFIEG.

The protein belongs to the prokaryotic/mitochondrial release factor family. Found in the A site of damaged 70S ribosomes, but not in undamaged ribosomes. Contacts (damaged) 16S rRNA, 23S rRNA and ribosomal protein uS12, but not mRNA.

Its function is as follows. Peptide chain release-like factor that acts on 70S ribosomes with specific damage to their decoding center (cleavage of 16S rRNA between adenine-1493 and guanosine-1494, E.coli 16S rRNA numbering). Probably acts as a peptidyl-tRNA hydrolase, allowing release of the nascent chain and dissociation of the 30S and 50S subunits. Can release mRNA as short as 19 nucleotides (nt, mRNA-19, which has a single amino acid in the P-site and only a single nt in the A-site) from the ribosome. This specific cleavage is inflicted by CdiA (ECL_04451) or by colicin E3-type (ColE3) proteins. In vivo the PrfH-RtcB2 pair restores growth in the presence of ribotoxins that specifically create this damage. The protein is Peptide chain release factor homolog of Escherichia coli (strain ATCC 25922 / DSM 1103 / LMG 8223 / NCIMB 12210 / NCTC 12241 / WDCM 00013 / Seattle 1946).